Consider the following 704-residue polypeptide: Glycine--tRNA ligase beta subunit (704 aa).

The protein belongs to the class-II aminoacyl-tRNA synthetase family. As to quaternary structure, tetramer of two alpha and two beta subunits.

It localises to the cytoplasm. It catalyses the reaction tRNA(Gly) + glycine + ATP = glycyl-tRNA(Gly) + AMP + diphosphate. The chain is Glycine--tRNA ligase beta subunit from Delftia acidovorans (strain DSM 14801 / SPH-1).